We begin with the raw amino-acid sequence, 291 residues long: Nucleotide-binding protein lwe2422 (291 aa).

13-20 lines the ATP pocket; the sequence is GMSGAGKT. Residue 63 to 66 participates in GTP binding; sequence DLRG.

This sequence belongs to the RapZ-like family.

Its function is as follows. Displays ATPase and GTPase activities. The sequence is that of Nucleotide-binding protein lwe2422 from Listeria welshimeri serovar 6b (strain ATCC 35897 / DSM 20650 / CCUG 15529 / CIP 8149 / NCTC 11857 / SLCC 5334 / V8).